Here is a 454-residue protein sequence, read N- to C-terminus: Tubulin beta-2 chain (454 aa).

GTP is bound by residues Gln11, Glu69, Ser138, Gly142, Thr143, Gly144, Asn204, and Asn226. Mg(2+) is bound at residue Glu69. A disordered region spans residues 426–454 (QEASVDDEAMEDDAEAEGGAGQNEAVEEF). Acidic residues predominate over residues 429–441 (SVDDEAMEDDAEA).

It belongs to the tubulin family. Dimer of alpha and beta chains. A typical microtubule is a hollow water-filled tube with an outer diameter of 25 nm and an inner diameter of 15 nM. Alpha-beta heterodimers associate head-to-tail to form protofilaments running lengthwise along the microtubule wall with the beta-tubulin subunit facing the microtubule plus end conferring a structural polarity. Microtubules usually have 13 protofilaments but different protofilament numbers can be found in some organisms and specialized cells. It depends on Mg(2+) as a cofactor.

The protein localises to the cytoplasm. It is found in the cytoskeleton. It localises to the spindle. Its subcellular location is the nucleus. Its function is as follows. Tubulin is the major constituent of microtubules, a cylinder consisting of laterally associated linear protofilaments composed of alpha- and beta-tubulin heterodimers. Microtubules grow by the addition of GTP-tubulin dimers to the microtubule end, where a stabilizing cap forms. Below the cap, tubulin dimers are in GDP-bound state, owing to GTPase activity of alpha-tubulin. In terms of biological role, this is the major beta tubulin of mitotic spindle. This is Tubulin beta-2 chain (BETC) from Physarum polycephalum (Slime mold).